A 310-amino-acid chain; its full sequence is Acetylglutamate kinase (310 aa).

Substrate contacts are provided by residues 70–71, R92, and N191; that span reads GG.

This sequence belongs to the acetylglutamate kinase family. ArgB subfamily.

The protein localises to the cytoplasm. The catalysed reaction is N-acetyl-L-glutamate + ATP = N-acetyl-L-glutamyl 5-phosphate + ADP. Its pathway is amino-acid biosynthesis; L-arginine biosynthesis; N(2)-acetyl-L-ornithine from L-glutamate: step 2/4. Catalyzes the ATP-dependent phosphorylation of N-acetyl-L-glutamate. This chain is Acetylglutamate kinase, found in Corynebacterium diphtheriae (strain ATCC 700971 / NCTC 13129 / Biotype gravis).